Consider the following 943-residue polypeptide: UvrABC system protein A (943 aa).

Residue 31-38 (GLSGSGKS) coordinates ATP. The C4-type zinc finger occupies 253 to 280 (CPHCGYSVPELEPRLFSFNNPAGACPTC). ABC transporter domains are found at residues 310-587 (WDRR…PNSI) and 607-937 (LDKK…RFLK). 640 to 647 (GVSGSGKS) lines the ATP pocket. The segment at 740–766 (CEACQGDGVLKVEMHFLPDVYVPCDQC) adopts a C4-type zinc-finger fold.

It belongs to the ABC transporter superfamily. UvrA family. As to quaternary structure, forms a heterotetramer with UvrB during the search for lesions.

The protein resides in the cytoplasm. The UvrABC repair system catalyzes the recognition and processing of DNA lesions. UvrA is an ATPase and a DNA-binding protein. A damage recognition complex composed of 2 UvrA and 2 UvrB subunits scans DNA for abnormalities. When the presence of a lesion has been verified by UvrB, the UvrA molecules dissociate. The chain is UvrABC system protein A from Haemophilus influenzae (strain ATCC 51907 / DSM 11121 / KW20 / Rd).